Consider the following 510-residue polypeptide: Putative folylpolyglutamate synthase (510 aa).

98-101 (GKGS) contacts ATP. Mg(2+)-binding residues include Ser-122, Glu-189, and His-217. ATP contacts are provided by Arg-342 and Asp-357.

It belongs to the folylpolyglutamate synthase family. It depends on a monovalent cation as a cofactor.

It is found in the mitochondrion inner membrane. The protein resides in the mitochondrion matrix. It localises to the cytoplasm. The enzyme catalyses (6S)-5,6,7,8-tetrahydrofolyl-(gamma-L-Glu)(n) + L-glutamate + ATP = (6S)-5,6,7,8-tetrahydrofolyl-(gamma-L-Glu)(n+1) + ADP + phosphate + H(+). It functions in the pathway cofactor biosynthesis; tetrahydrofolylpolyglutamate biosynthesis. In terms of biological role, catalyzes conversion of folates to polyglutamate derivatives allowing concentration of folate compounds in the cell and the intracellular retention of these cofactors, which are important substrates for most of the folate-dependent enzymes that are involved in one-carbon transfer reactions involved in purine, pyrimidine and amino acid synthesis. In Caenorhabditis elegans, this protein is Putative folylpolyglutamate synthase.